Consider the following 172-residue polypeptide: Myosin regulatory light chain 12B (172 aa).

A compositionally biased stretch (basic residues) spans 1-16 (MSSKKAKTKTTKKRPQ). Residues 1-20 (MSSKKAKTKTTKKRPQRATS) form a disordered region. Thr19 carries the phosphothreonine; by MLCK and ZIPK/DAPK3 modification. A Phosphoserine; by MLCK and ZIPK/DAPK3 modification is found at Ser20. EF-hand domains are found at residues 29-64 (SQIQ…LGKN), 98-133 (DPED…MGDR), and 134-169 (FTDE…GAKD). Residues Asp42, Asn44, Asp46, and Asp53 each coordinate Ca(2+).

As to quaternary structure, myosin is a hexamer of 2 heavy chains and 4 light chains: interacts with myosin heavy chain MYO19. In terms of processing, phosphorylation increases the actin-activated myosin ATPase activity and thereby regulates the contractile activity. It is required to generate the driving force in the migration of the cells but not necessary for localization of myosin-2 at the leading edge. Phosphorylation is reduced following epigallocatechin-3-O-gallate treatment.

Its function is as follows. Myosin regulatory subunit that plays an important role in regulation of both smooth muscle and nonmuscle cell contractile activity via its phosphorylation. Phosphorylation triggers actin polymerization in vascular smooth muscle. Implicated in cytokinesis, receptor capping, and cell locomotion. In Rattus norvegicus (Rat), this protein is Myosin regulatory light chain 12B (Myl12b).